The following is a 731-amino-acid chain: Vezatin (731 aa).

The next 2 helical transmembrane spans lie at 91–111 (LATPNIWDLSMLFAFISLLVM) and 114–134 (TWWIVSSWLVWGVILFVYLVI). Residues 382-414 (VRSLQLHLKALLNEVIILEDELEKLVCTKETQE) adopt a coiled-coil conformation. 2 disordered regions span residues 570–671 (PVDP…DSLQ) and 710–731 (QTFGDEEEEQIIEENKNKIEEK). Polar residues predominate over residues 577–586 (ISNSEPSMNS). Basic and acidic residues predominate over residues 590–601 (KVSKNDTEEESS). Positions 658–671 (GLTTAPPTPRDSLQ) are enriched in polar residues. Residues 712–721 (FGDEEEEQII) are compositionally biased toward acidic residues. Basic and acidic residues predominate over residues 722 to 731 (EENKNKIEEK).

It belongs to the vezatin family. Interacts with USH2A (via the cytoplasmic region); the interaction associates VEZT with the USH2 complex at the stereocilia base. Interacts with myosin MYO7A and the cadherin-catenins complex.

The protein localises to the cell membrane. It localises to the cell projection. It is found in the stereocilium membrane. Its subcellular location is the cell junction. The protein resides in the adherens junction. The protein localises to the nucleus. It localises to the cytoplasmic vesicle. It is found in the secretory vesicle. Its subcellular location is the acrosome. Its function is as follows. Plays a pivotal role in the establishment of adherens junctions and their maintenance in adult life. Required for morphogenesis of the preimplantation embryo, and for the implantation process. This chain is Vezatin (VEZT), found in Pongo abelii (Sumatran orangutan).